Here is a 436-residue protein sequence, read N- to C-terminus: Ribulose bisphosphate carboxylase large chain (436 aa).

The substrate site is built by Asn-104 and Thr-154. The active-site Proton acceptor is the Lys-156. Lys-158 is a substrate binding site. Lys-182, Asp-184, and Glu-185 together coordinate Mg(2+). Residue Lys-182 is modified to N6-carboxylysine. His-275 (proton acceptor) is an active-site residue. Substrate is bound by residues Arg-276, His-308, and Ser-360.

This sequence belongs to the RuBisCO large chain family. Type I subfamily. In terms of assembly, heterohexadecamer of 8 large chains and 8 small chains; disulfide-linked. The disulfide link is formed within the large subunit homodimers. Mg(2+) serves as cofactor. In terms of processing, the disulfide bond which can form in the large chain dimeric partners within the hexadecamer appears to be associated with oxidative stress and protein turnover.

The protein localises to the plastid. The protein resides in the chloroplast. It catalyses the reaction 2 (2R)-3-phosphoglycerate + 2 H(+) = D-ribulose 1,5-bisphosphate + CO2 + H2O. The enzyme catalyses D-ribulose 1,5-bisphosphate + O2 = 2-phosphoglycolate + (2R)-3-phosphoglycerate + 2 H(+). Its function is as follows. RuBisCO catalyzes two reactions: the carboxylation of D-ribulose 1,5-bisphosphate, the primary event in carbon dioxide fixation, as well as the oxidative fragmentation of the pentose substrate in the photorespiration process. Both reactions occur simultaneously and in competition at the same active site. The sequence is that of Ribulose bisphosphate carboxylase large chain from Euglena geniculata.